The following is a 308-amino-acid chain: MKVIFAGTPDFAAAALRAVAAAGFEIPLVLTQPDRPKGRGMQLTAPPVKQAALELGLRVEQPEKLRNNAEALQMLKEVEADVMVVAAYGLILPQEVLDTPKHGCLNIHASLLPRWRGAAPIQRAIEAGDAETGVCIMQMDIGLDTGDVVSEHRYAIQPTDTANEVHDALMEIGAAAVVADLQQLQSKGRLNAVKQPEEGVTYAQKLSKEEARIDWSKSAAVIERKIRAFNPVPAAWVEYQGKPMKIRRAEVVAQQGAAGEVLSCSADGLVVACGENALKITELQPAGGRRMNIAAFAAGRHIEAGAKL.

S110 to P113 contacts (6S)-5,6,7,8-tetrahydrofolate.

This sequence belongs to the Fmt family.

It carries out the reaction L-methionyl-tRNA(fMet) + (6R)-10-formyltetrahydrofolate = N-formyl-L-methionyl-tRNA(fMet) + (6S)-5,6,7,8-tetrahydrofolate + H(+). Its function is as follows. Attaches a formyl group to the free amino group of methionyl-tRNA(fMet). The formyl group appears to play a dual role in the initiator identity of N-formylmethionyl-tRNA by promoting its recognition by IF2 and preventing the misappropriation of this tRNA by the elongation apparatus. This chain is Methionyl-tRNA formyltransferase, found in Neisseria meningitidis serogroup B (strain ATCC BAA-335 / MC58).